The following is a 257-amino-acid chain: Aspartate/glutamate leucyltransferase (257 aa).

It belongs to the R-transferase family. Bpt subfamily.

It localises to the cytoplasm. It catalyses the reaction N-terminal L-glutamyl-[protein] + L-leucyl-tRNA(Leu) = N-terminal L-leucyl-L-glutamyl-[protein] + tRNA(Leu) + H(+). The enzyme catalyses N-terminal L-aspartyl-[protein] + L-leucyl-tRNA(Leu) = N-terminal L-leucyl-L-aspartyl-[protein] + tRNA(Leu) + H(+). Functions in the N-end rule pathway of protein degradation where it conjugates Leu from its aminoacyl-tRNA to the N-termini of proteins containing an N-terminal aspartate or glutamate. The sequence is that of Aspartate/glutamate leucyltransferase from Phenylobacterium zucineum (strain HLK1).